A 1584-amino-acid polypeptide reads, in one-letter code: Pentafunctional AROM polypeptide (1584 aa).

Residues 1–384 (MSQDTDVVSV…YEKHATVVSD (384 aa)) form a 3-dehydroquinate synthase region. Residues 46–48 (DTN), 83–86 (ETSK), 114–116 (GGV), and D119 each bind NAD(+). R130 is a binding site for 7-phospho-2-dehydro-3-deoxy-D-arabino-heptonate. 139-140 (TT) contributes to the NAD(+) binding site. 7-phospho-2-dehydro-3-deoxy-D-arabino-heptonate is bound by residues D146 and K152. K161 provides a ligand contact to NAD(+). N162 is a binding site for 7-phospho-2-dehydro-3-deoxy-D-arabino-heptonate. NAD(+) is bound by residues 179 to 182 (FLET) and N190. E194 contributes to the Zn(2+) binding site. Residues 194-197 (EVIK) and K250 contribute to the 7-phospho-2-dehydro-3-deoxy-D-arabino-heptonate site. The active-site Proton acceptor; for 3-dehydroquinate synthase activity is E260. 7-phospho-2-dehydro-3-deoxy-D-arabino-heptonate contacts are provided by residues 264–268 (RNLLN) and H271. H271 is a binding site for Zn(2+). H275 (proton acceptor; for 3-dehydroquinate synthase activity) is an active-site residue. The 7-phospho-2-dehydro-3-deoxy-D-arabino-heptonate site is built by H287 and K356. H287 contacts Zn(2+). The tract at residues 397 to 843 (VSPFDNSVSD…WDVLRNSFKI (447 aa)) is EPSP synthase. C825 serves as the catalytic For EPSP synthase activity. The interval 863 to 1058 (RASVILIGMR…IQKPHSFFLS (196 aa)) is shikimate kinase. 870–877 (GMRGAGKT) contacts ATP. Residues 1059-1280 (LTFPNINDAI…AAPGQLSVRQ (222 aa)) form a 3-dehydroquinase region. H1182 serves as the catalytic Proton acceptor; for 3-dehydroquinate dehydratase activity. K1211 (schiff-base intermediate with substrate; for 3-dehydroquinate dehydratase activity) is an active-site residue. The segment at 1293–1584 (PKKFYLFGTP…YMVLCAKEHN (292 aa)) is shikimate dehydrogenase.

This sequence in the N-terminal section; belongs to the sugar phosphate cyclases superfamily. Dehydroquinate synthase family. In the 2nd section; belongs to the EPSP synthase family. It in the 3rd section; belongs to the shikimate kinase family. The protein in the 4th section; belongs to the type-I 3-dehydroquinase family. This sequence in the C-terminal section; belongs to the shikimate dehydrogenase family. Homodimer. It depends on Zn(2+) as a cofactor.

The protein resides in the cytoplasm. It catalyses the reaction 7-phospho-2-dehydro-3-deoxy-D-arabino-heptonate = 3-dehydroquinate + phosphate. The enzyme catalyses 3-dehydroquinate = 3-dehydroshikimate + H2O. It carries out the reaction shikimate + NADP(+) = 3-dehydroshikimate + NADPH + H(+). The catalysed reaction is shikimate + ATP = 3-phosphoshikimate + ADP + H(+). It catalyses the reaction 3-phosphoshikimate + phosphoenolpyruvate = 5-O-(1-carboxyvinyl)-3-phosphoshikimate + phosphate. Its pathway is metabolic intermediate biosynthesis; chorismate biosynthesis; chorismate from D-erythrose 4-phosphate and phosphoenolpyruvate: step 2/7. It participates in metabolic intermediate biosynthesis; chorismate biosynthesis; chorismate from D-erythrose 4-phosphate and phosphoenolpyruvate: step 3/7. The protein operates within metabolic intermediate biosynthesis; chorismate biosynthesis; chorismate from D-erythrose 4-phosphate and phosphoenolpyruvate: step 4/7. It functions in the pathway metabolic intermediate biosynthesis; chorismate biosynthesis; chorismate from D-erythrose 4-phosphate and phosphoenolpyruvate: step 5/7. Its pathway is metabolic intermediate biosynthesis; chorismate biosynthesis; chorismate from D-erythrose 4-phosphate and phosphoenolpyruvate: step 6/7. In terms of biological role, the AROM polypeptide catalyzes 5 consecutive enzymatic reactions in prechorismate polyaromatic amino acid biosynthesis. The chain is Pentafunctional AROM polypeptide from Schizosaccharomyces japonicus (strain yFS275 / FY16936) (Fission yeast).